The chain runs to 316 residues: ATP synthase gamma chain (316 aa).

This sequence belongs to the ATPase gamma chain family. In terms of assembly, F-type ATPases have 2 components, CF(1) - the catalytic core - and CF(0) - the membrane proton channel. CF(1) has five subunits: alpha(3), beta(3), gamma(1), delta(1), epsilon(1). CF(0) has three main subunits: a, b and c.

It localises to the cellular thylakoid membrane. Functionally, produces ATP from ADP in the presence of a proton gradient across the membrane. The gamma chain is believed to be important in regulating ATPase activity and the flow of protons through the CF(0) complex. In Synechococcus sp. (strain CC9605), this protein is ATP synthase gamma chain.